The following is a 686-amino-acid chain: MAM domain-containing protein 2 (686 aa).

Positions 1–18 (MLLRGVLLALQALQLAGA) are cleaved as a signal peptide. 4 MAM domains span residues 24 to 169 (GSCA…YCIE), 168 to 329 (IECD…HCQN), 340 to 498 (ASCN…SCSS), and 507 to 666 (GECT…PCGE). Asn-134 and Asn-329 each carry an N-linked (GlcNAc...) asparagine glycan. Disordered stretches follow at residues 521-543 (EKRNRSSWHRRRGETPTSYTGPK) and 665-686 (GEMEDTTQQSSGYSEDLNEIEY). A glycan (N-linked (GlcNAc...) asparagine) is linked at Asn-524.

O-glycosylated.

It localises to the secreted. Its subcellular location is the extracellular space. The protein resides in the extracellular matrix. The polypeptide is MAM domain-containing protein 2 (MAMDC2) (Homo sapiens (Human)).